Here is a 123-residue protein sequence, read N- to C-terminus: MESSLYKKTSGKARRALRVRKALKGCSLKPRLSVVKTNKHVYVQLIDDVEGKTLASISTLAKVAKTSGLTRKNQDNAKALGIKIAELGKGLQVDRVVFDRGAHKYHGVVAMVADGAREGGLQF.

It belongs to the universal ribosomal protein uL18 family. In terms of assembly, part of the 50S ribosomal subunit; part of the 5S rRNA/L5/L18/L25 subcomplex. Contacts the 5S and 23S rRNAs.

Functionally, this is one of the proteins that bind and probably mediate the attachment of the 5S RNA into the large ribosomal subunit, where it forms part of the central protuberance. The chain is Large ribosomal subunit protein uL18 from Chlamydia trachomatis serovar A (strain ATCC VR-571B / DSM 19440 / HAR-13).